A 363-amino-acid chain; its full sequence is Glutamate 5-kinase (363 aa).

Lys-6 contacts ATP. Residues Ser-46, Asp-133, and Asn-145 each contribute to the substrate site. ATP-binding positions include 165 to 166 (TD) and 207 to 213 (TGGMHTK). The PUA domain occupies 271-349 (TGRLLLDEGA…RDIEAVLGFT (79 aa)).

The protein belongs to the glutamate 5-kinase family.

It localises to the cytoplasm. The catalysed reaction is L-glutamate + ATP = L-glutamyl 5-phosphate + ADP. Its pathway is amino-acid biosynthesis; L-proline biosynthesis; L-glutamate 5-semialdehyde from L-glutamate: step 1/2. Catalyzes the transfer of a phosphate group to glutamate to form L-glutamate 5-phosphate. This is Glutamate 5-kinase from Deinococcus geothermalis (strain DSM 11300 / CIP 105573 / AG-3a).